Here is a 328-residue protein sequence, read N- to C-terminus: NADH-quinone oxidoreductase subunit H (328 aa).

8 consecutive transmembrane segments (helical) span residues 8–28 (VAAIAFALFQAVVILLAAVGA), 81–101 (GLFVLAPAIAMASLLLSFMVI), 114–134 (IGLLFFFAMAGINVYAVLFAG), 154–174 (LSYEVFMGLSLMGVVAMAGSF), 186–206 (LWFIVPQFFGFCTFLVAGIAV), 237–257 (FFVGEYVGIVLVSALMVTLFL), 265–285 (LPPIVWFLLKTAVFVGFFILL), and 304–324 (VCLPLTLINLLVTGALILIFS).

This sequence belongs to the complex I subunit 1 family. In terms of assembly, NDH-1 is composed of 14 different subunits. Subunits NuoA, H, J, K, L, M, N constitute the membrane sector of the complex.

Its subcellular location is the cell inner membrane. It catalyses the reaction a quinone + NADH + 5 H(+)(in) = a quinol + NAD(+) + 4 H(+)(out). Functionally, NDH-1 shuttles electrons from NADH, via FMN and iron-sulfur (Fe-S) centers, to quinones in the respiratory chain. The immediate electron acceptor for the enzyme in this species is believed to be ubiquinone. Couples the redox reaction to proton translocation (for every two electrons transferred, four hydrogen ions are translocated across the cytoplasmic membrane), and thus conserves the redox energy in a proton gradient. This subunit may bind ubiquinone. The protein is NADH-quinone oxidoreductase subunit H of Chromohalobacter salexigens (strain ATCC BAA-138 / DSM 3043 / CIP 106854 / NCIMB 13768 / 1H11).